A 433-amino-acid chain; its full sequence is Enolase (433 aa).

Residue S1 is modified to N-acetylserine. (2R)-2-phosphoglycerate-binding residues include S36 and H157. The Proton donor role is filled by E209. D244, E294, and D319 together coordinate Mn(2+). Residues K344, R373, and S374 each coordinate (2R)-2-phosphoglycerate. Catalysis depends on K344, which acts as the Proton acceptor.

Belongs to the enolase family. Homodimer. Mg(2+) is required as a cofactor.

The protein localises to the cytoplasm. It catalyses the reaction (2R)-2-phosphoglycerate = phosphoenolpyruvate + H2O. It functions in the pathway carbohydrate degradation; glycolysis; pyruvate from D-glyceraldehyde 3-phosphate: step 4/5. Its activity is regulated as follows. Inhibited by 2-phosphoglycolic acid. The protein is Enolase of Homarus gammarus (European lobster).